The sequence spans 195 residues: ATP-dependent Clp protease proteolytic subunit (195 aa).

S101 functions as the Nucleophile in the catalytic mechanism. The active site involves H126.

Belongs to the peptidase S14 family.

Its subcellular location is the plastid. It is found in the chloroplast stroma. The enzyme catalyses Hydrolysis of proteins to small peptides in the presence of ATP and magnesium. alpha-casein is the usual test substrate. In the absence of ATP, only oligopeptides shorter than five residues are hydrolyzed (such as succinyl-Leu-Tyr-|-NHMec, and Leu-Tyr-Leu-|-Tyr-Trp, in which cleavage of the -Tyr-|-Leu- and -Tyr-|-Trp bonds also occurs).. Cleaves peptides in various proteins in a process that requires ATP hydrolysis. Has a chymotrypsin-like activity. Plays a major role in the degradation of misfolded proteins. The sequence is that of ATP-dependent Clp protease proteolytic subunit from Bigelowiella natans (Pedinomonas minutissima).